The sequence spans 704 residues: DNA ligase (704 aa).

NAD(+) contacts are provided by residues 44-48, 93-94, and Glu-125; these read DYEYD and SI. The active-site N6-AMP-lysine intermediate is the Lys-127. NAD(+) contacts are provided by Arg-148, Glu-184, Lys-300, and Lys-324. The Zn(2+) site is built by Cys-418, Cys-421, Cys-436, and Cys-442. The region spanning 625 to 704 is the BRCT domain; the sequence is IISSNISGKI…DEWEHLINEK (80 aa).

The protein belongs to the NAD-dependent DNA ligase family. LigA subfamily. The cofactor is Mg(2+). Requires Mn(2+) as cofactor.

It catalyses the reaction NAD(+) + (deoxyribonucleotide)n-3'-hydroxyl + 5'-phospho-(deoxyribonucleotide)m = (deoxyribonucleotide)n+m + AMP + beta-nicotinamide D-nucleotide.. Functionally, DNA ligase that catalyzes the formation of phosphodiester linkages between 5'-phosphoryl and 3'-hydroxyl groups in double-stranded DNA using NAD as a coenzyme and as the energy source for the reaction. It is essential for DNA replication and repair of damaged DNA. The polypeptide is DNA ligase (Pelobacter propionicus (strain DSM 2379 / NBRC 103807 / OttBd1)).